Reading from the N-terminus, the 511-residue chain is Bifunctional purine biosynthesis protein PurH (511 aa).

Residues 1-145 (MKKRALVSVS…KNHQFVSVIV (145 aa)) form the MGS-like domain.

The protein belongs to the PurH family.

The enzyme catalyses (6R)-10-formyltetrahydrofolate + 5-amino-1-(5-phospho-beta-D-ribosyl)imidazole-4-carboxamide = 5-formamido-1-(5-phospho-D-ribosyl)imidazole-4-carboxamide + (6S)-5,6,7,8-tetrahydrofolate. The catalysed reaction is IMP + H2O = 5-formamido-1-(5-phospho-D-ribosyl)imidazole-4-carboxamide. It functions in the pathway purine metabolism; IMP biosynthesis via de novo pathway; 5-formamido-1-(5-phospho-D-ribosyl)imidazole-4-carboxamide from 5-amino-1-(5-phospho-D-ribosyl)imidazole-4-carboxamide (10-formyl THF route): step 1/1. It participates in purine metabolism; IMP biosynthesis via de novo pathway; IMP from 5-formamido-1-(5-phospho-D-ribosyl)imidazole-4-carboxamide: step 1/1. The polypeptide is Bifunctional purine biosynthesis protein PurH (Bacillus cereus (strain G9842)).